Here is a 452-residue protein sequence, read N- to C-terminus: Minor capsid protein (452 aa).

Basic and acidic residues-rich tracts occupy residues 219–236 and 247–258; these read VDKPEDKPKPVFDDKGKQ and GKPDISKPGEKQ. Residues 219–258 form a disordered region; sequence VDKPEDKPKPVFDDKGKQPTDTVPPVDNGKPDISKPGEKQ.

Belongs to the closteroviridae minor capsid protein family.

Its subcellular location is the virion. Minor capsid protein that encapsidates the 5'-terminal portion of the viral genome. The polypeptide is Minor capsid protein (Lettuce infectious yellows virus (isolate United States/92) (LIYV)).